Here is a 477-residue protein sequence, read N- to C-terminus: MQVLHVCSEMFPLLKTGGLADVIGALPAAQIADGVDVRVLLPGFPDIRRGIPDAHVVSRRDTFAGKISLLFGHYNGVGIYLIDAPHLYERPGSPYHDTNLYAYTDNVLRFALLGWVGCEMACGLDPFWRPDVVHAHDWHAGLAPAYLAARGRPAKSVFTVHNLAYQGMFYAKHMDDIELPWSFFNMHGLEFNGQLSFLKAGLYYADHITAVSPTYAREITEPQFAYGMEGLLRQRHLEGRLSGILNGVDEKIWNPESDLLLASRYTRDTLEEKAENKRQLQIAMGLKVNDKVPLFAVVSRLTNQKGLDLVLEALPGLLEQGGQLALLGAGDPVLQEGFLAAAAEHPGQVGVQIGYHEAFSHRIMGGADVILVPSRFEPCGLTQLYGLKYGTLPLVRRTGGLADTVSDSSLENLADGIASGFVFEDSNAWSLLRAIRRAFVLWSRPSLWRFVQRQAMAMDFSWQVAAKSYRELYYRLK.

Position 15 (Lys15) interacts with ADP-alpha-D-glucose.

Belongs to the glycosyltransferase 1 family. Bacterial/plant glycogen synthase subfamily.

The enzyme catalyses [(1-&gt;4)-alpha-D-glucosyl](n) + ADP-alpha-D-glucose = [(1-&gt;4)-alpha-D-glucosyl](n+1) + ADP + H(+). It participates in glycan biosynthesis; glycogen biosynthesis. Synthesizes alpha-1,4-glucan chains using ADP-glucose. This is Glycogen synthase (glgA) from Salmonella typhimurium (strain LT2 / SGSC1412 / ATCC 700720).